A 273-amino-acid polypeptide reads, in one-letter code: Outer surface protein A (273 aa).

Residues 1 to 16 (MKKYLLGIGLILALIA) form the signal peptide. The N-palmitoyl cysteine moiety is linked to residue Cys17. The S-diacylglycerol cysteine moiety is linked to residue Cys17.

It belongs to the OspA lipoprotein family.

It localises to the cell outer membrane. It is found in the cell surface. In terms of biological role, induces host (human and mouse) cytokine release by monocyte cell lines via TLR2 and CD14; nonlipidated protein does not stimulate host cells. This is Outer surface protein A from Borreliella burgdorferi (strain ATCC 35210 / DSM 4680 / CIP 102532 / B31) (Borrelia burgdorferi).